The chain runs to 346 residues: Dihydroorotase (346 aa).

Zn(2+)-binding residues include His14 and His16. Substrate contacts are provided by residues 16–18 (HLR) and Asn42. Positions 100, 137, and 175 each coordinate Zn(2+). At Lys100 the chain carries N6-carboxylysine. His137 contributes to the substrate binding site. Substrate is bound at residue Leu220. Asp248 is a binding site for Zn(2+). Residue Asp248 is part of the active site. His252 and Ala264 together coordinate substrate.

This sequence belongs to the metallo-dependent hydrolases superfamily. DHOase family. Class II DHOase subfamily. Homodimer. The cofactor is Zn(2+).

It catalyses the reaction (S)-dihydroorotate + H2O = N-carbamoyl-L-aspartate + H(+). It functions in the pathway pyrimidine metabolism; UMP biosynthesis via de novo pathway; (S)-dihydroorotate from bicarbonate: step 3/3. In terms of biological role, catalyzes the reversible cyclization of carbamoyl aspartate to dihydroorotate. The chain is Dihydroorotase from Ruegeria sp. (strain TM1040) (Silicibacter sp.).